The following is a 290-amino-acid chain: Thioredoxin-like protein 1 (290 aa).

Positions 24-104 (VDCYADWCGP…PQALKEKVAL (81 aa)) constitute a Thioredoxin domain. An intrachain disulfide couples cysteine 31 to cysteine 34. One can recognise a PITH domain in the interval 118–290 (SSSAPVKGFA…SKGKLQKVEA (173 aa)).

It localises to the cytoplasm. Its subcellular location is the nucleus. Has a role in cellular detoxification of alkyl hydroperoxide. In Schizosaccharomyces pombe (strain 972 / ATCC 24843) (Fission yeast), this protein is Thioredoxin-like protein 1 (txl1).